The chain runs to 129 residues: Phosphoribosyl-AMP cyclohydrolase (129 aa).

Residue Asp-79 coordinates Mg(2+). Cys-80 serves as a coordination point for Zn(2+). Mg(2+)-binding residues include Asp-81 and Asp-83. Residues Cys-96 and Cys-103 each coordinate Zn(2+).

This sequence belongs to the PRA-CH family. As to quaternary structure, homodimer. It depends on Mg(2+) as a cofactor. Requires Zn(2+) as cofactor.

Its subcellular location is the cytoplasm. The enzyme catalyses 1-(5-phospho-beta-D-ribosyl)-5'-AMP + H2O = 1-(5-phospho-beta-D-ribosyl)-5-[(5-phospho-beta-D-ribosylamino)methylideneamino]imidazole-4-carboxamide. The protein operates within amino-acid biosynthesis; L-histidine biosynthesis; L-histidine from 5-phospho-alpha-D-ribose 1-diphosphate: step 3/9. Catalyzes the hydrolysis of the adenine ring of phosphoribosyl-AMP. This Magnetococcus marinus (strain ATCC BAA-1437 / JCM 17883 / MC-1) protein is Phosphoribosyl-AMP cyclohydrolase.